The sequence spans 967 residues: Leucine--tRNA ligase (967 aa).

A 'HIGH' region motif is present at residues 43 to 53 (PYLSGHLHVGH). Residues 650-654 (KMSKS) carry the 'KMSKS' region motif. K653 provides a ligand contact to ATP.

The protein belongs to the class-I aminoacyl-tRNA synthetase family.

Its subcellular location is the cytoplasm. It carries out the reaction tRNA(Leu) + L-leucine + ATP = L-leucyl-tRNA(Leu) + AMP + diphosphate. In Pyrococcus horikoshii (strain ATCC 700860 / DSM 12428 / JCM 9974 / NBRC 100139 / OT-3), this protein is Leucine--tRNA ligase.